The chain runs to 83 residues: Retinal cone rhodopsin-sensitive cGMP 3',5'-cyclic phosphodiesterase subunit gamma (83 aa).

The interval 1 to 51 (MSDSPCLSPPAPSQGPTTPRKGPPKFKQRQTRQFKSKPPKKGVKGFGDDIP) is disordered. The span at 22–43 (GPPKFKQRQTRQFKSKPPKKGV) shows a compositional bias: basic residues.

The protein belongs to the rod/cone cGMP-PDE gamma subunit family. Tetramer composed of two catalytic chains (alpha and beta), and two inhibitory chains (gamma).

It carries out the reaction 3',5'-cyclic GMP + H2O = GMP + H(+). Its function is as follows. Participates in processes of transmission and amplification of the visual signal. cGMP-PDEs are the effector molecules in G-protein-mediated phototransduction in vertebrate rods and cones. The polypeptide is Retinal cone rhodopsin-sensitive cGMP 3',5'-cyclic phosphodiesterase subunit gamma (Pde6h) (Rattus norvegicus (Rat)).